The chain runs to 116 residues: T cell receptor alpha variable 38-2/delta variable 8 (116 aa).

The first 21 residues, 1–21 (MACPGFLWALVISTCLEFSMA), serve as a signal peptide directing secretion. The Ig-like domain maps to 22-116 (QTVTQSQPEM…AAMYFCAYRS (95 aa)). A disulfide bridge connects residues cysteine 43 and cysteine 112. A glycan (N-linked (GlcNAc...) asparagine) is linked at asparagine 78.

In terms of assembly, alpha-beta TR is a heterodimer composed of an alpha and beta chain; disulfide-linked. The alpha-beta TR is associated with the transmembrane signaling CD3 coreceptor proteins to form the TR-CD3 (TcR or TCR). The assembly of alpha-beta TR heterodimers with CD3 occurs in the endoplasmic reticulum where a single alpha-beta TR heterodimer associates with one CD3D-CD3E heterodimer, one CD3G-CD3E heterodimer and one CD247 homodimer forming a stable octameric structure. CD3D-CD3E and CD3G-CD3E heterodimers preferentially associate with TR alpha and TR beta chains, respectively. The association of the CD247 homodimer is the last step of TcR assembly in the endoplasmic reticulum and is required for transport to the cell surface.

It is found in the cell membrane. Its function is as follows. V region of the variable domain of T cell receptor (TR) alpha chain that participates in the antigen recognition. Alpha-beta T cell receptors are antigen specific receptors which are essential to the immune response and are present on the cell surface of T lymphocytes. Recognize peptide-major histocompatibility (MH) (pMH) complexes that are displayed by antigen presenting cells (APC), a prerequisite for efficient T cell adaptive immunity against pathogens. Binding of alpha-beta TR to pMH complex initiates TR-CD3 clustering on the cell surface and intracellular activation of LCK that phosphorylates the ITAM motifs of CD3G, CD3D, CD3E and CD247 enabling the recruitment of ZAP70. In turn ZAP70 phosphorylates LAT, which recruits numerous signaling molecules to form the LAT signalosome. The LAT signalosome propagates signal branching to three major signaling pathways, the calcium, the mitogen-activated protein kinase (MAPK) kinase and the nuclear factor NF-kappa-B (NF-kB) pathways, leading to the mobilization of transcription factors that are critical for gene expression and essential for T cell growth and differentiation. The T cell repertoire is generated in the thymus, by V-(D)-J rearrangement. This repertoire is then shaped by intrathymic selection events to generate a peripheral T cell pool of self-MH restricted, non-autoaggressive T cells. Post-thymic interaction of alpha-beta TR with the pMH complexes shapes TR structural and functional avidity. This is T cell receptor alpha variable 38-2/delta variable 8 from Homo sapiens (Human).